The chain runs to 181 residues: MEAVHDFYPILFLVILFIVLYIAIKTGVFAHFKETFRLQNLLWLLGFVIVGYILGNIAHYLYLRFVPALDTIVENEATNNFVDSFLPTWFVYILMVVIAPIYEELMFREYFYRFFSHKWLAYILSILLFTLIHTRLTWSFFEYLPMSVIVTSTFHRYKRVSDSIIVHGGYNLMVLIFHIII.

Transmembrane regions (helical) follow at residues 10–30, 41–61, 81–101, 114–134, and 161–181; these read ILFLVILFIVLYIAIKTGVFA, LLWLLGFVIVGYILGNIAHYL, FVDSFLPTWFVYILMVVIAPI, FFSHKWLAYILSILLFTLIHT, and SDSIIVHGGYNLMVLIFHIII.

This sequence belongs to the UPF0177 family.

The protein resides in the cell membrane. This Lactococcus lactis subsp. lactis (strain IL1403) (Streptococcus lactis) protein is UPF0177 protein YbdI (ybdI).